A 402-amino-acid polypeptide reads, in one-letter code: MDHVLNPEEKVSQTNSESGGADGAFQHVKGEHSSPKLSASEKSLPGNTKSPLKRKAAEPDSPPKRPRLEEGHGSLVVTHYNELPETGLEIRSQSRIFHLRNFNNWMKSALIGEFVEKVQQRTRNITVLDLGCGKGGDLLKWRKGGISKLVCTDIADVSVKQCEQRYKDMKRKSRNERIFEAEFLTSDSTKELLSEKYIDPEIKFDICSCQFVYHYSFETYEQADTMLRNACERLCPGGFFIGTTPDGFELVKRLEASDTNSFGNDVYTVTFEKKGKYPLFGCKYDFSLEEVVNVPEFLVYFPVLVEMAKKYQMKLIYKKTFREFFEEKVKNDEQKMLLKRMKALESYPAAPNTKLVSGRTEDYEHAQKMVENGQIKLPLGTLSKSEWDATSIYLLFAFEKQA.

Residues 1–11 (MDHVLNPEEKV) show a composition bias toward basic and acidic residues. Residues 1–75 (MDHVLNPEEK…PRLEEGHGSL (75 aa)) are disordered. Over residues 35–50 (PKLSASEKSLPGNTKS) the composition is skewed to polar residues. The span at 55–72 (KAAEPDSPPKRPRLEEGH) shows a compositional bias: basic and acidic residues. The region spanning 94–401 (SRIFHLRNFN…IYLLFAFEKQ (308 aa)) is the mRNA cap 0 methyltransferase domain. 103 to 104 (NN) provides a ligand contact to mRNA. 6 residues coordinate S-adenosyl-L-methionine: K107, G131, D153, D187, Q210, and Y215.

Belongs to the class I-like SAM-binding methyltransferase superfamily. mRNA cap 0 methyltransferase family.

Its subcellular location is the nucleus. It carries out the reaction a 5'-end (5'-triphosphoguanosine)-ribonucleoside in mRNA + S-adenosyl-L-methionine = a 5'-end (N(7)-methyl 5'-triphosphoguanosine)-ribonucleoside in mRNA + S-adenosyl-L-homocysteine. In terms of biological role, catalytic subunit of the mRNA-capping methyltransferase RNMT:RAMAC complex that methylates the N7 position of the added guanosine to the 5'-cap structure of mRNAs. Binds RNA containing 5'-terminal GpppC. This Xenopus laevis (African clawed frog) protein is mRNA cap guanine-N(7) methyltransferase (rnmt).